The primary structure comprises 512 residues: Oxalate--CoA ligase (512 aa).

ATP is bound at residue His168–Val179. Phosphoserine occurs at positions 283 and 284. The FACS signature appears at Asp381–Asp429. The Microbody targeting signal signature appears at Ala510 to Leu512.

It belongs to the ATP-dependent AMP-binding enzyme family.

It localises to the peroxisome matrix. The protein resides in the peroxisome membrane. It carries out the reaction oxalate + ATP + CoA = oxalyl-CoA + AMP + diphosphate. Catalyzes the first step in a degradation pathway of oxalate to CO(2) to protect the cell against the harmful effects of oxalate derived from endogenous processes or an environmental sources. In Schizosaccharomyces pombe (strain 972 / ATCC 24843) (Fission yeast), this protein is Oxalate--CoA ligase (pcs60).